We begin with the raw amino-acid sequence, 896 residues long: Sodium/hydrogen exchanger 5 (896 aa).

Residues 1–45 lie on the Cytoplasmic side of the membrane; that stretch reads MLRAALSLLALPLAGAAEEPTQKPESPGEPPPGLELFRWQWHEVE. A helical transmembrane segment spans residues 46–66; sequence APYLVALWILVASLAKIVFHL. Topologically, residues 67–73 are extracellular; it reads SRKVTSL. Residues 74-94 traverse the membrane as a helical segment; that stretch reads VPESCLLILLGLVLGGIVLAV. Residues 95 to 103 lie on the Cytoplasmic side of the membrane; the sequence is AKKAEYQLE. A helical membrane pass occupies residues 104-124; it reads PGTFFLFLLPPIVLDSGYFMP. Residues 125–134 are Extracellular-facing; sequence SRLFFDNLGA. Residues 135-155 form a helical membrane-spanning segment; the sequence is ILTYAVVGTLWNAFTTGAALW. Residues 156-173 are Cytoplasmic-facing; sequence GLQQAGLVAPRVQAGLLD. Residues 174 to 194 traverse the membrane as a helical segment; sequence FLLFGSLISAVDPVAVLAVFE. Residues 195–200 are Extracellular-facing; that stretch reads EVHVNE. A glycan (N-linked (GlcNAc...) asparagine) is linked at N199. Residues 201-221 form a helical membrane-spanning segment; sequence TLFIIVFGESLLNDAVTVVLY. Over 222-246 the chain is Cytoplasmic; sequence KVCNSFVEMGSANVQATDYLKGVAS. A helical membrane pass occupies residues 247-267; sequence LFVVSLGGAAVGLVFAFLLAL. The Extracellular portion of the chain corresponds to 268 to 276; sequence TTRFTKRVR. Residues 277–297 traverse the membrane as a helical segment; that stretch reads IIEPLLVFLLAYAAYLTAEMA. Over 298–331 the chain is Cytoplasmic; that stretch reads SLSAILAVTMCGLGCKKYVEANISHKSRTTVKYT. The chain crosses the membrane as a helical span at residues 332–352; that stretch reads MKTLASCAETVIFMLLGISAV. Topologically, residues 353–360 are extracellular; it reads DSSKWAWD. A helical membrane pass occupies residues 361–381; the sequence is SGLVLGTLIFILFFRALGVVL. Residues 382–398 are Cytoplasmic-facing; sequence QTWVLNQFRLVPLDKID. A helical transmembrane segment spans residues 399-419; that stretch reads QVVMSYGGLRGAVAFALVILL. At 420–428 the chain is on the extracellular side; sequence DRTKVPAKD. Residues 429 to 449 form a helical membrane-spanning segment; sequence YFVATTIVVVFFTVIVQGLTI. Over 450–896 the chain is Cytoplasmic; that stretch reads KPLVKWLKVK…CIQFNRGSRL (447 aa). Positions 576-721 are required for interaction with ARRB2; sequence GSGACLDLQV…SETEKEDDEG (146 aa). 3 disordered regions span residues 658–686, 701–720, and 818–864; these read TKSKPRPRKTGRRKKDGVANAEATNGKHR, ESEEEEEESDSSETEKEDDE, and HPRG…QQQE. The span at 660-672 shows a compositional bias: basic residues; it reads SKPRPRKTGRRKK. Positions 854-864 are enriched in polar residues; that stretch reads ESSADLPQQQE.

The protein belongs to the monovalent cation:proton antiporter 1 (CPA1) transporter (TC 2.A.36) family. Interacts with CHP1 and CHP2. Interacts with ARRB2; facilitates the endocytosis of SLC9A5 from the plasma membrane. Interacts with RACK1; this interaction positively regulates SLC9A5 activity and promotes SLC9A5 localization to focal adhesions. Interacts with SCAMP2; this interaction regulates SLC9A5 cell-surface targeting and SLC9A5 activity. Post-translationally, phosphorylated by PRKAA2; promotes its accumulation at the cell surface. Phosphorylated by CSNK2A1 in a manner favoring its beta-arrestin binding and endocytosis. Mainly expressed in brain. Expressed in neurons of the central and peripheral nervous system. Expressed also in testis, spleen, and skeletal muscle.

It localises to the cell membrane. It is found in the recycling endosome membrane. The protein resides in the cell projection. The protein localises to the dendritic spine membrane. Its subcellular location is the synaptic cell membrane. It localises to the cell junction. It is found in the focal adhesion. It carries out the reaction Na(+)(in) + H(+)(out) = Na(+)(out) + H(+)(in). Its activity is regulated as follows. ATP-depletion almost completely abolishes SLC9A5 activity. Inhibited by amiloride compounds. Plasma membrane Na(+)/H(+) antiporter. Mediates the electroneutral exchange of intracellular H(+) ions for extracellular Na(+) in 1:1 stoichiometry, thus regulating intracellular pH homeostasis, in particular in neural tissues. Acts as a negative regulator of dendritic spine growth. Plays a role in postsynaptic remodeling and signaling. Can also contribute to organellar pH regulation, with consequences for receptor tyrosine kinase trafficking. The chain is Sodium/hydrogen exchanger 5 from Homo sapiens (Human).